A 255-amino-acid chain; its full sequence is Uracil-DNA glycosylase (255 aa).

Residue D93 is the Proton acceptor of the active site.

The protein belongs to the uracil-DNA glycosylase (UDG) superfamily. UNG family.

Its subcellular location is the host nucleus. The catalysed reaction is Hydrolyzes single-stranded DNA or mismatched double-stranded DNA and polynucleotides, releasing free uracil.. Its function is as follows. Excises uracil residues from the DNA which can arise as a result of misincorporation of dUMP residues by DNA polymerase or deamination of cytosines. Therefore may reduce deleterious uracil incorporation into the viral genome, particularly in terminally differentiated cells which lack DNA repair enzymes. This is Uracil-DNA glycosylase (U81) from Human herpesvirus 6A (strain Uganda-1102) (HHV-6 variant A).